The following is a 92-amino-acid chain: Small ribosomal subunit protein uS19c (92 aa).

This sequence belongs to the universal ribosomal protein uS19 family.

It localises to the plastid. The protein resides in the chloroplast. Functionally, protein S19 forms a complex with S13 that binds strongly to the 16S ribosomal RNA. The protein is Small ribosomal subunit protein uS19c of Lemna minor (Common duckweed).